The following is a 185-amino-acid chain: Large ribosomal subunit protein uL5 (185 aa).

This sequence belongs to the universal ribosomal protein uL5 family. As to quaternary structure, part of the 50S ribosomal subunit; part of the 5S rRNA/L5/L18/L25 subcomplex. Contacts the 5S rRNA and the P site tRNA. Forms a bridge to the 30S subunit in the 70S ribosome.

In terms of biological role, this is one of the proteins that bind and probably mediate the attachment of the 5S RNA into the large ribosomal subunit, where it forms part of the central protuberance. In the 70S ribosome it contacts protein S13 of the 30S subunit (bridge B1b), connecting the 2 subunits; this bridge is implicated in subunit movement. Contacts the P site tRNA; the 5S rRNA and some of its associated proteins might help stabilize positioning of ribosome-bound tRNAs. In Rhizobium leguminosarum bv. trifolii (strain WSM2304), this protein is Large ribosomal subunit protein uL5.